The chain runs to 313 residues: NADH-ubiquinone oxidoreductase chain 1 (313 aa).

The next 8 helical transmembrane spans lie at 2-22 (ILSV…VAFL), 72-92 (VFFF…MPVP), 102-122 (FAVL…MASG), 148-168 (LGLI…AQFF), 173-193 (EVML…STVA), 222-244 (FALF…ALLF), 249-268 (FSLL…YLWF), and 293-313 (LGLL…GGGL).

It belongs to the complex I subunit 1 family.

It is found in the mitochondrion inner membrane. It catalyses the reaction a ubiquinone + NADH + 5 H(+)(in) = a ubiquinol + NAD(+) + 4 H(+)(out). In terms of biological role, core subunit of the mitochondrial membrane respiratory chain NADH dehydrogenase (Complex I) that is believed to belong to the minimal assembly required for catalysis. Complex I functions in the transfer of electrons from NADH to the respiratory chain. The immediate electron acceptor for the enzyme is believed to be ubiquinone. The sequence is that of NADH-ubiquinone oxidoreductase chain 1 (ND1) from Branchiostoma lanceolatum (Common lancelet).